Reading from the N-terminus, the 156-residue chain is Large ribosomal subunit protein uL22 (156 aa).

The protein belongs to the universal ribosomal protein uL22 family. Part of the 50S ribosomal subunit.

This protein binds specifically to 23S rRNA. It makes multiple contacts with different domains of the 23S rRNA in the assembled 50S subunit and ribosome. Functionally, the globular domain of the protein is located near the polypeptide exit tunnel on the outside of the subunit, while an extended beta-hairpin is found that lines the wall of the exit tunnel in the center of the 70S ribosome. The protein is Large ribosomal subunit protein uL22 of Sulfurisphaera tokodaii (strain DSM 16993 / JCM 10545 / NBRC 100140 / 7) (Sulfolobus tokodaii).